The sequence spans 417 residues: MFRRLLIATLIGILAALAVAAFRHAMQLLEWIFLSNDTGSLVNAAEGLSPWRRLITPALGGLAAGLLLWGWQKMNQQRPHAPTDYMEALQTDGQFDVGASLVKSLASLLVVVSGSAIGREGAMILLAALAASSFARRFTPREEWKLWIASGAAAGMAGAYHAPLAGSLFIAEILFGTLMLASLGPVVVSAVVALLTTHVLNGSDSLLYTVHLTVDLHAREYVMIVSTGLVAGLCGPLLMWLMTASHNSFLRLKLSPPWQLALGGLIVGLLSLLTPTVWGNGYSVVQSFLLSPPLFSLIGGIFVCKILAVLASSGSGAPGGVFTPTLFVGLSIGMFLGRIWGFWLPGSDEIAILLGLAGMATLLAATTHAPIMSTLMICEMTGEYQLLPGLLIACVVASVLSRTLRHDSIYRQHAAEH.

Over 1-4 (MFRR) the chain is Cytoplasmic. Residues 5–25 (LLIATLIGILAALAVAAFRHA) form a helical membrane-spanning segment. Residues 26 to 53 (MQLLEWIFLSNDTGSLVNAAEGLSPWRR) are Periplasmic-facing. The chain crosses the membrane as a helical span at residues 54 to 74 (LITPALGGLAAGLLLWGWQKM). Residues 75–145 (NQQRPHAPTD…RRFTPREEWK (71 aa)) lie on the Cytoplasmic side of the membrane. A helical membrane pass occupies residues 146-166 (LWIASGAAAGMAGAYHAPLAG). At 167-172 (SLFIAE) the chain is on the periplasmic side. Residues 173-195 (ILFGTLMLASLGPVVVSAVVALL) traverse the membrane as a helical segment. Topologically, residues 196–221 (TTHVLNGSDSLLYTVHLTVDLHAREY) are cytoplasmic. A helical membrane pass occupies residues 222 to 242 (VMIVSTGLVAGLCGPLLMWLM). Residues 243–257 (TASHNSFLRLKLSPP) are Periplasmic-facing. Residues 258–278 (WQLALGGLIVGLLSLLTPTVW) traverse the membrane as a helical segment. The Cytoplasmic segment spans residues 279 to 287 (GNGYSVVQS). The helical transmembrane segment at 288–308 (FLLSPPLFSLIGGIFVCKILA) threads the bilayer. The Periplasmic portion of the chain corresponds to 309–315 (VLASSGS). A helical membrane pass occupies residues 316 to 336 (GAPGGVFTPTLFVGLSIGMFL). Residues 337-348 (GRIWGFWLPGSD) lie on the Cytoplasmic side of the membrane. The helical transmembrane segment at 349–371 (EIAILLGLAGMATLLAATTHAPI) threads the bilayer. The Periplasmic portion of the chain corresponds to 372-379 (MSTLMICE). Residues 380–400 (MTGEYQLLPGLLIACVVASVL) traverse the membrane as a helical segment. The Cytoplasmic portion of the chain corresponds to 401 to 417 (SRTLRHDSIYRQHAAEH).

It belongs to the chloride channel (TC 2.A.49) family. ClcB subfamily.

It is found in the cell inner membrane. Its function is as follows. Probably acts as an electrical shunt for an outwardly-directed proton pump that is linked to amino acid decarboxylation, as part of the extreme acid resistance (XAR) response. The chain is Voltage-gated ClC-type chloride channel ClcB (clcB) from Salmonella typhimurium (strain LT2 / SGSC1412 / ATCC 700720).